The sequence spans 523 residues: tRNA-2-methylthio-N(6)-dimethylallyladenosine synthase (523 aa).

The interval 1 to 26 is disordered; the sequence is MNEKQRLEQTGQIQTASHPADRKSDL. Residues 8-17 are compositionally biased toward polar residues; that stretch reads EQTGQIQTAS. Residues 80–198 enclose the MTTase N-terminal domain; the sequence is RKFYIRTYGC…LPYILHEAYM (119 aa). [4Fe-4S] cluster is bound by residues Cys-89, Cys-125, Cys-159, Cys-235, Cys-239, and Cys-242. The region spanning 221-451 is the Radical SAM core domain; the sequence is RKGNIKAWVN…NALVQEIAAK (231 aa). The 64-residue stretch at 454–517 folds into the TRAM domain; the sequence is KQYEGQVVEV…TWTLTGELAN (64 aa).

The protein belongs to the methylthiotransferase family. MiaB subfamily. Monomer. Requires [4Fe-4S] cluster as cofactor.

The protein resides in the cytoplasm. It catalyses the reaction N(6)-dimethylallyladenosine(37) in tRNA + (sulfur carrier)-SH + AH2 + 2 S-adenosyl-L-methionine = 2-methylsulfanyl-N(6)-dimethylallyladenosine(37) in tRNA + (sulfur carrier)-H + 5'-deoxyadenosine + L-methionine + A + S-adenosyl-L-homocysteine + 2 H(+). In terms of biological role, catalyzes the methylthiolation of N6-(dimethylallyl)adenosine (i(6)A), leading to the formation of 2-methylthio-N6-(dimethylallyl)adenosine (ms(2)i(6)A) at position 37 in tRNAs that read codons beginning with uridine. The protein is tRNA-2-methylthio-N(6)-dimethylallyladenosine synthase of Geobacillus thermodenitrificans (strain NG80-2).